We begin with the raw amino-acid sequence, 215 residues long: Pyrrolidone-carboxylate peptidase (215 aa).

Active-site residues include E80, C143, and H167.

This sequence belongs to the peptidase C15 family. As to quaternary structure, homotetramer.

It localises to the cytoplasm. The enzyme catalyses Release of an N-terminal pyroglutamyl group from a polypeptide, the second amino acid generally not being Pro.. In terms of biological role, removes 5-oxoproline from various penultimate amino acid residues except L-proline. The sequence is that of Pyrrolidone-carboxylate peptidase from Bacillus cereus (strain Q1).